Here is a 450-residue protein sequence, read N- to C-terminus: Phosphoglucosamine mutase (450 aa).

The active-site Phosphoserine intermediate is the Ser-102. Residues Ser-102, Asp-243, Asp-245, and Asp-247 each contribute to the Mg(2+) site. Ser-102 is subject to Phosphoserine.

It belongs to the phosphohexose mutase family. Mg(2+) serves as cofactor. Activated by phosphorylation.

It carries out the reaction alpha-D-glucosamine 1-phosphate = D-glucosamine 6-phosphate. Functionally, catalyzes the conversion of glucosamine-6-phosphate to glucosamine-1-phosphate. The sequence is that of Phosphoglucosamine mutase from Rhizobium leguminosarum bv. trifolii (strain WSM2304).